We begin with the raw amino-acid sequence, 23 residues long: Magainin-B2 (23 aa).

Expressed by the skin glands.

Its subcellular location is the secreted. In terms of biological role, has antimicrobial activity against Gram-negative bacterium E.coli ATCC 25922 (MIC=50 uM) and against fungus C.albicans ATCC 90028 (MIC=100 uM). Has no hemolytic activity against human erythrocytes even at high concentrations. In Xenopus borealis (Kenyan clawed frog), this protein is Magainin-B2.